Here is a 454-residue protein sequence, read N- to C-terminus: tRNA modification GTPase MnmE (454 aa).

The (6S)-5-formyl-5,6,7,8-tetrahydrofolate site is built by arginine 23, glutamate 80, and lysine 120. Residues 216-377 (GMKVVIAGKP…LRTHLKQSMG (162 aa)) form the TrmE-type G domain. K(+) is bound at residue asparagine 226. Residues 226–231 (NAGKSS), 245–251 (TAIAGTT), 270–273 (DTAG), and 335–338 (NKAD) each bind GTP. Serine 230 contributes to the Mg(2+) binding site. The K(+) site is built by threonine 245, isoleucine 247, and threonine 250. Residue threonine 251 coordinates Mg(2+). Lysine 454 contributes to the (6S)-5-formyl-5,6,7,8-tetrahydrofolate binding site.

This sequence belongs to the TRAFAC class TrmE-Era-EngA-EngB-Septin-like GTPase superfamily. TrmE GTPase family. As to quaternary structure, homodimer. Heterotetramer of two MnmE and two MnmG subunits. It depends on K(+) as a cofactor.

The protein resides in the cytoplasm. Functionally, exhibits a very high intrinsic GTPase hydrolysis rate. Involved in the addition of a carboxymethylaminomethyl (cmnm) group at the wobble position (U34) of certain tRNAs, forming tRNA-cmnm(5)s(2)U34. The sequence is that of tRNA modification GTPase MnmE from Sodalis glossinidius (strain morsitans).